Consider the following 425-residue polypeptide: MSSDKVKNGNEPEESEESCGDESASYTTNSTTSRSKSPSSSTRSKRRGRRSTKSKPKSRAAYKYDTHVKENHGANIFGVAFNTLLGKDEPQVFATAGSNRVTVYECPRQGGMQLLHCYADPDPDEVFYTCAWSYDLKTSSPLLAAAGYRGVIRVIDVEQNEAVGNYIGHGQAINELKFHPHKLQLLLSGSKDHAIRLWNIQSHVCIAILGGVEGHRDEVLSIDFNMRGDRIVSSGMDHSLKLWCLNTPEFHHKIELSNTFSQEKSTLPFPTVTKHFPDFSTRDIHRNYVDCVQWFGNFVLSKSCENAIVCWKPGQLHQSFEQVKPSDSSCTIIAEFEYDECEIWFVRFGFNPWQKVIALGNQQGKVYVWELDPSDPEGAHMTTLHNSRSVATVRQIAFSRDASVLVYVCDDATVWRWNRRQTTSI.

Residues 1–10 (MSSDKVKNGN) show a composition bias toward basic and acidic residues. The tract at residues 1 to 64 (MSSDKVKNGN…KPKSRAAYKY (64 aa)) is disordered. The span at 11–20 (EPEESEESCG) shows a compositional bias: acidic residues. At S15 the chain carries Phosphoserine. Positions 21 to 42 (DESASYTTNSTTSRSKSPSSST) are enriched in low complexity. The span at 43 to 60 (RSKRRGRRSTKSKPKSRA) shows a compositional bias: basic residues. WD repeat units follow at residues 71 to 114 (NHGA…GMQL), 126 to 165 (VFYTCAWSYDLKTSSPLLAAAGYRGVIRVIDVEQNEAVGN), 168 to 208 (GHGQ…CIAI), 214 to 253 (GHRDEVLSIDFNMRGDRIVSSGMDHSLKLWCLNTPEFHHK), 284 to 321 (IHRNYVDCVQWFGNFVLSKSCENAIVCWKPGQLHQSFE), 340 to 379 (ECEIWFVRFGFNPWQKVIALGNQQGKVYVWELDPSDPEGA), and 388 to 424 (RSVATVRQIAFSRDASVLVYVCDDATVWRWNRRQTTS).

Belongs to the WD repeat ESC family. Component of the polycomb repressive complex 2 (PRC2, also known as the Esc/E(Z) complex), composed of Caf1-55, esc, E(z), Su(z)12, and possibly pho. PRC2 associates with the accessory components Jarid2 and jing to form the PRC2 Jarid2-jing variant (PRC2.2). PRC2 may also associate with Pcl and HDAC1/Rpd3 during early embryogenesis. This complex is distinct from the PRC1 complex, which contains many other PcG proteins like Pc, Ph, Psc, Su(z)2. The two complexes however cooperate and interact together during the first 3 hours of development to establish PcG silencing. Interacts with corto in vitro. In terms of tissue distribution, widely expressed.

It localises to the nucleus. In terms of biological role, polycomb group (PcG) protein. While PcG proteins are generally required to maintain the transcriptionally repressive state of homeotic genes throughout development, this protein is specifically required during the first 6 hours of embryogenesis to establish the repressed state. Component of the Esc/E(z) complex, which methylates 'Lys-9' and 'Lys-27' residues of histone H3, leading to transcriptional repression of the affected target gene. The Esc/E(z) complex is necessary but not sufficient for the repression of homeotic target genes, suggesting that the recruitment of the distinct PRC1 complex is also required. The chain is Polycomb protein esc (esc) from Drosophila melanogaster (Fruit fly).